An 86-amino-acid polypeptide reads, in one-letter code: Long neurotoxin homolog (86 aa).

The first 21 residues, 1-21 (MKTLLLTLVVVTIVCLALGYT), serve as a signal peptide directing secretion. Cystine bridges form between cysteine 24–cysteine 45, cysteine 27–cysteine 32, cysteine 38–cysteine 63, cysteine 67–cysteine 78, and cysteine 79–cysteine 84.

The protein belongs to the three-finger toxin family. Ancestral subfamily. Orphan group II sub-subfamily. As to expression, expressed by the venom gland.

It localises to the secreted. Its function is as follows. Binds with low affinity and weakly inhibits muscle nicotinic acetylcholine receptor (nAChR). The chain is Long neurotoxin homolog from Naja atra (Chinese cobra).